The chain runs to 126 residues: Holo-[acyl-carrier-protein] synthase (126 aa).

Mg(2+) contacts are provided by D9 and E58.

The protein belongs to the P-Pant transferase superfamily. AcpS family. Mg(2+) serves as cofactor.

Its subcellular location is the cytoplasm. The catalysed reaction is apo-[ACP] + CoA = holo-[ACP] + adenosine 3',5'-bisphosphate + H(+). In terms of biological role, transfers the 4'-phosphopantetheine moiety from coenzyme A to a Ser of acyl-carrier-protein. The chain is Holo-[acyl-carrier-protein] synthase from Salmonella paratyphi B (strain ATCC BAA-1250 / SPB7).